The sequence spans 150 residues: Large ribosomal subunit protein bL9 (150 aa).

The protein belongs to the bacterial ribosomal protein bL9 family.

Binds to the 23S rRNA. The sequence is that of Large ribosomal subunit protein bL9 from Burkholderia thailandensis (strain ATCC 700388 / DSM 13276 / CCUG 48851 / CIP 106301 / E264).